The following is a 1091-amino-acid chain: ATP-dependent helicase/deoxyribonuclease subunit B (1091 aa).

This sequence belongs to the helicase family. AddB/RexB type 2 subfamily. Heterodimer of AddA and RexB. Mg(2+) serves as cofactor.

Its function is as follows. The heterodimer acts as both an ATP-dependent DNA helicase and an ATP-dependent, dual-direction single-stranded exonuclease. Recognizes the chi site generating a DNA molecule suitable for the initiation of homologous recombination. This subunit has 5' -&gt; 3' nuclease activity but not helicase activity. In Streptococcus pneumoniae (strain CGSP14), this protein is ATP-dependent helicase/deoxyribonuclease subunit B.